We begin with the raw amino-acid sequence, 122 residues long: Large ribosomal subunit protein uL18 (122 aa).

Residues 1–19 (MTKLSRKLQTQKRHRRLRR) show a composition bias toward basic residues. A disordered region spans residues 1–21 (MTKLSRKLQTQKRHRRLRRSV).

This sequence belongs to the universal ribosomal protein uL18 family. In terms of assembly, part of the 50S ribosomal subunit; part of the 5S rRNA/L5/L18/L25 subcomplex. Contacts the 5S and 23S rRNAs.

Its function is as follows. This is one of the proteins that bind and probably mediate the attachment of the 5S RNA into the large ribosomal subunit, where it forms part of the central protuberance. This chain is Large ribosomal subunit protein uL18, found in Prochlorococcus marinus (strain MIT 9312).